The sequence spans 599 residues: MGSVSSLISGHSFHSKHCRASQYKLRKSSHLKKLNRYSDGLLRFGFSQDSGRGKSSSKMGKSEDFFYIKVSQKARGSHRPDYTALSSGDIGGQTGVDFDPATPPKLMPFSNQLEMSSDKGAVRPTAFKPVLPRSGAILHSSPESTSHQLHPMPPDKPKEQELKPGLCSGALSDSGRNSMSSLPTHSTTSSYQLDPLVTPVGPTSRFGGSAHNITQGIILQDSNMMSLKALSFSDGGSKLAHPGKADKGASCVRSPLSTDECTIQELEQKLLQRETALQKLQRSFDEKEFASGQTFEERPRRTRDELECLEPKSKLKPPSQKSQRTQQVLQLQVLQLQQEKRQLRQELESLMKEQDLLETKLRSYEREKTNFAPALEETQWEVCQKSGEISLLKQQLKESQLEVNTKASEILSLKAQLKDTRGKLDGMELKTQDLESALRTKGLELEVCENELQRKKNEAELLREKVNLLEQELMELRAQAALHPAPLGPPGVGLTFSEDIPALQRELDRLRAELKEERQGHDQMSSGFQHERLVWKEEKEKVIQYQRQLQQSYLAMYQRNQRLEKALQQLARGDGPGEPFEIDLEGADIPYEDIIATEI.

The N-myristoyl glycine moiety is linked to residue G2. 2 disordered regions span residues G135–S190 and E288–R324. Basic and acidic residues predominate over residues P153–L162. Positions S174–S190 are enriched in polar residues. A coiled-coil region spans residues L256–R572. Residues E288 to S313 show a composition bias toward basic and acidic residues.

Belongs to the LZTS family. Binds EEF1G, TLK2 and CDK1. In terms of processing, phosphorylated on serine residues. Hyperphosphorylated by the cAMP-dependent kinase PKA during cell-cycle progression.

The protein localises to the cytoplasm. The protein resides in the cell membrane. It is found in the cell projection. It localises to the dendritic spine. Its subcellular location is the postsynaptic density. The protein localises to the synapse. Its function is as follows. Involved in the regulation of cell growth. May stabilize the active CDC2-cyclin B1 complex and thereby contribute to the regulation of the cell cycle and the prevention of uncontrolled cell proliferation. May act as tumor suppressor. The protein is Leucine zipper putative tumor suppressor 1 (Lzts1) of Mus musculus (Mouse).